A 159-amino-acid chain; its full sequence is SsrA-binding protein (159 aa).

Residues 134 to 159 form a disordered region; the sequence is KEHDKRDTERDRDWSRDKERLMKHNA.

It belongs to the SmpB family.

It is found in the cytoplasm. Functionally, required for rescue of stalled ribosomes mediated by trans-translation. Binds to transfer-messenger RNA (tmRNA), required for stable association of tmRNA with ribosomes. tmRNA and SmpB together mimic tRNA shape, replacing the anticodon stem-loop with SmpB. tmRNA is encoded by the ssrA gene; the 2 termini fold to resemble tRNA(Ala) and it encodes a 'tag peptide', a short internal open reading frame. During trans-translation Ala-aminoacylated tmRNA acts like a tRNA, entering the A-site of stalled ribosomes, displacing the stalled mRNA. The ribosome then switches to translate the ORF on the tmRNA; the nascent peptide is terminated with the 'tag peptide' encoded by the tmRNA and targeted for degradation. The ribosome is freed to recommence translation, which seems to be the essential function of trans-translation. This Marinomonas sp. (strain MWYL1) protein is SsrA-binding protein.